We begin with the raw amino-acid sequence, 1353 residues long: Tenascin-R (1353 aa).

A signal peptide spans 1-33 (MGTDSENPVLRNVLISFNLLLLGAVLKPFECRL). Residues 132 to 156 (SLQELLSRIEMLEREVSMLRDQCNS) adopt a coiled-coil conformation. Asparagine 179 and asparagine 197 each carry an N-linked (GlcNAc...) asparagine glycan. 4 consecutive EGF-like domains span residues 187–198 (CICSEGWAGSNC), 234–260 (CPAG…GEDC), 265–291 (CPRD…GEDC), and 292–323 (GWLR…QDCS). N-linked (GlcNAc...) asparagine glycosylation is present at asparagine 277. 2 disulfides stabilise this stretch: cysteine 296-cysteine 306 and cysteine 313-cysteine 322. Fibronectin type-III domains follow at residues 327–419 (PPEN…TPQG), 420–504 (LKFK…TLID), 505–594 (GPTQ…TEID), 595–686 (APKN…TELD), 687–776 (SPRD…VRPI), 777–863 (TQLH…TGMD), 864–952 (APKD…AMDA), 953–1037 (PLGV…TLLD), and 1038–1126 (PPTN…GGRV). N-linked (GlcNAc...) asparagine glycosylation is found at asparagine 391, asparagine 469, and asparagine 580. Residues asparagine 734, asparagine 790, asparagine 872, asparagine 1031, asparagine 1041, asparagine 1256, and asparagine 1342 are each glycosylated (N-linked (GlcNAc...) asparagine). In terms of domain architecture, Fibrinogen C-terminal spans 1124 to 1339 (GRVFANPQDC…FVEMKMRPYN (216 aa)).

The protein belongs to the tenascin family. Forms homodimers and homotrimers. Interacts with CNTN1, NFASC and CSPG5. In terms of tissue distribution, brain specific.

The protein localises to the secreted. It is found in the extracellular space. It localises to the extracellular matrix. In terms of biological role, neural extracellular matrix (ECM) protein involved in interactions with different cells and matrix components. Involved in cell attachment and neurite formation. Interaction with CNTN1 enhances the neurite outgrowth. This chain is Tenascin-R (TNR), found in Gallus gallus (Chicken).